A 332-amino-acid polypeptide reads, in one-letter code: MALLCYNRGCGQRFDPETNSDDACTYHPGVPVFHDALKGWSCCKRRTTDFSDFLSIAGCTKGRHNSEKPPEPVKPEVKTTEKKELSELKPRFQEHIIQAPKPVEAIKRPSPDEPMTNLELKISASLKQALDKLKLSSGNEENKKEEDSDEIKVGTSCKNGGCSKTYQGPQSLEEVCVYHSGVPIFHEGMKYWSCCRRKTSDFNTFLAQEGCTTGKHTWTKKDAGKKVVPCRHDWHQTGGEVTISVYAKNSLPELSQVVANSTLLNVHIVFEGEKEFHQNVKLWGVIDVKRSYVTMTATKIEITMRKAEPMQWASLELPAAKNQEKQKEDTAE.

Ala2 carries the post-translational modification N-acetylalanine. Residues Ala2 to Val77 form an interaction with PPP5C region. The Zn(2+) site is built by Cys5, Cys10, Cys24, His27, Cys42, and Cys43. CHORD domains follow at residues Cys5 to His64 and Cys157 to His216. Thr47 bears the Phosphothreonine mark. Ser51 is modified (phosphoserine). Zn(2+)-binding residues include Cys59, His64, Cys157, Cys162, Cys176, His179, Cys194, Cys195, Cys211, and His216. Positions Lys61–Lys82 are disordered. The segment covering His64–Lys82 has biased composition (basic and acidic residues). The segment at Asn65–Glu316 is interaction with HSP90AA1 and HSP90AB1. The 90-residue stretch at Val227–Glu316 folds into the CS domain.

In terms of assembly, interacts with HSP90AA1, HSP90AB1, PPP5C, ROCK1 and ROCK2.

Regulates centrosome duplication, probably by inhibiting the kinase activity of ROCK2. Proposed to act as co-chaperone for HSP90. May play a role in the regulation of NOD1 via a HSP90 chaperone complex. In vitro, has intrinsic chaperone activity. This function may be achieved by inhibiting association of ROCK2 with NPM1. Plays a role in ensuring the localization of the tyrosine kinase receptor EGFR to the plasma membrane, and thus ensures the subsequent regulation of EGFR activity and EGF-induced actin cytoskeleton remodeling. Involved in stress response. Prevents tumorigenesis. The sequence is that of Cysteine and histidine-rich domain-containing protein 1 (CHORDC1) from Sus scrofa (Pig).